Consider the following 207-residue polypeptide: MALHTVLIMLSLLPMLEAQNPEHANITIGEPITNETLGWLSDKWFFMGAAFRKLEYRQAIQMMQTEFFYLTTNLINDTIELRESQTIGDQCVYNSTHLGFQRENGTFSKYEGGVETFAHLIVLRKHGAFMLAFDLNDEKKRGLSLYAKRPDMTLELREVFQKAVKHVGMDESEIIFVDWKKDKCGQQEKKQLELGKETKKDPEEGQA.

An N-terminal signal peptide occupies residues 1–18 (MALHTVLIMLSLLPMLEA). N-linked (GlcNAc...) asparagine glycans are attached at residues Asn-25, Asn-34, Asn-76, Asn-94, and Asn-104. Cysteines 91 and 184 form a disulfide.

Belongs to the calycin superfamily. Lipocalin family. As to expression, expressed by the liver and secreted in plasma.

The protein localises to the secreted. Its function is as follows. Functions as a transport protein in the blood stream. Binds various ligands in the interior of its beta-barrel domain. Appears to function in modulating the activity of the immune system during the acute-phase reaction. The protein is Alpha-1-acid glycoprotein 8 (Orm8) of Mus caroli (Ryukyu mouse).